Here is a 599-residue protein sequence, read N- to C-terminus: Histone-arginine methyltransferase CARMER (599 aa).

The SAM-dependent MTase PRMT-type domain occupies 127-434 (ASQYFQFYGY…QRQSYDVEID (308 aa)). The S-adenosyl-L-methionine site is built by Gln140, Arg149, Gly173, Glu195, Glu224, and Thr252. Arg487 is subject to Asymmetric dimethylarginine; by autocatalysis.

This sequence belongs to the class I-like SAM-binding methyltransferase superfamily. Protein arginine N-methyltransferase family. As to quaternary structure, homodimer. In terms of processing, the dimethylated protein is the major form.

It is found in the cytoplasm. The protein localises to the nucleus. It catalyses the reaction L-arginyl-[protein] + 2 S-adenosyl-L-methionine = N(omega),N(omega)-dimethyl-L-arginyl-[protein] + 2 S-adenosyl-L-homocysteine + 2 H(+). Its function is as follows. Methylates (mono- and asymmetric dimethylation) the guanidino nitrogens of arginyl residues in proteins. May methylate histone H3 at 'Arg-17' and activate transcription via chromatin remodeling. The protein is Histone-arginine methyltransferase CARMER (Art4) of Culex quinquefasciatus (Southern house mosquito).